Reading from the N-terminus, the 393-residue chain is Exosome complex component RRP45 (393 aa).

The ARE binding stretch occupies residues 1 to 268 (MRDTPLSNCE…SEITELINKA (268 aa)).

This sequence belongs to the RNase PH family. As to quaternary structure, component of the RNA exosome complex.

It localises to the cytoplasm. The protein resides in the nucleus. The protein localises to the nucleolus. Its subcellular location is the nucleoplasm. Non-catalytic component of the RNA exosome complex which has 3'-&gt;5' exoribonuclease activity and participates in a multitude of cellular RNA processing and degradation events. In the nucleus, the RNA exosome complex is involved in proper maturation of stable RNA species such as rRNA, snRNA and snoRNA, in the elimination of RNA processing by-products and non-coding 'pervasive' transcripts, such as antisense RNA species and promoter-upstream transcripts (PROMPTs), and of mRNAs with processing defects, thereby limiting or excluding their export to the cytoplasm. In the cytoplasm, the RNA exosome complex is involved in general mRNA turnover and specifically degrades inherently unstable mRNAs containing AU-rich elements (AREs) within their 3' untranslated regions, and in RNA surveillance pathways, preventing translation of aberrant mRNAs. This chain is Exosome complex component RRP45, found in Danio rerio (Zebrafish).